We begin with the raw amino-acid sequence, 201 residues long: Retinol-binding protein 4 (201 aa).

A signal peptide spans 1–18 (MEWVWALVLLAALGGGSA). Disulfide bonds link cysteine 22/cysteine 178, cysteine 88/cysteine 192, and cysteine 138/cysteine 147. Glutamine 116 contacts substrate. The residue at position 139 (arginine 139) is an Omega-N-methylarginine.

The protein belongs to the calycin superfamily. Lipocalin family. As to quaternary structure, interacts with TTR. Interaction with TTR prevents its loss by filtration through the kidney glomeruli. Interacts with STRA6. Detected in blood plasma (at protein level).

It is found in the secreted. Its function is as follows. Retinol-binding protein that mediates retinol transport in blood plasma. Delivers retinol from the liver stores to the peripheral tissues. Transfers the bound all-trans retinol to STRA6, that then facilitates retinol transport across the cell membrane. The polypeptide is Retinol-binding protein 4 (Rbp4) (Rattus norvegicus (Rat)).